We begin with the raw amino-acid sequence, 247 residues long: Protein GrpE (247 aa).

Disordered regions lie at residues 1 to 64 (MNDE…QALD) and 214 to 247 (SMGP…EKSD). Composition is skewed to polar residues over residues 30 to 39 (DEPSLSNVAE), 49 to 63 (DVTS…SQAL), and 228 to 241 (TEQS…TDQQ).

The protein belongs to the GrpE family. Homodimer.

The protein localises to the cytoplasm. Its function is as follows. Participates actively in the response to hyperosmotic and heat shock by preventing the aggregation of stress-denatured proteins, in association with DnaK and GrpE. It is the nucleotide exchange factor for DnaK and may function as a thermosensor. Unfolded proteins bind initially to DnaJ; upon interaction with the DnaJ-bound protein, DnaK hydrolyzes its bound ATP, resulting in the formation of a stable complex. GrpE releases ADP from DnaK; ATP binding to DnaK triggers the release of the substrate protein, thus completing the reaction cycle. Several rounds of ATP-dependent interactions between DnaJ, DnaK and GrpE are required for fully efficient folding. The protein is Protein GrpE of Prochlorococcus marinus (strain MIT 9211).